The primary structure comprises 120 residues: Aspartate 1-decarboxylase (120 aa).

S25 functions as the Schiff-base intermediate with substrate; via pyruvic acid in the catalytic mechanism. Pyruvic acid (Ser) is present on S25. A substrate-binding site is contributed by T57. The active-site Proton donor is Y58. 73–75 (GAA) serves as a coordination point for substrate.

The protein belongs to the PanD family. Heterooctamer of four alpha and four beta subunits. Requires pyruvate as cofactor. Is synthesized initially as an inactive proenzyme, which is activated by self-cleavage at a specific serine bond to produce a beta-subunit with a hydroxyl group at its C-terminus and an alpha-subunit with a pyruvoyl group at its N-terminus.

It is found in the cytoplasm. The enzyme catalyses L-aspartate + H(+) = beta-alanine + CO2. It functions in the pathway cofactor biosynthesis; (R)-pantothenate biosynthesis; beta-alanine from L-aspartate: step 1/1. Functionally, catalyzes the pyruvoyl-dependent decarboxylation of aspartate to produce beta-alanine. The polypeptide is Aspartate 1-decarboxylase (Polynucleobacter asymbioticus (strain DSM 18221 / CIP 109841 / QLW-P1DMWA-1) (Polynucleobacter necessarius subsp. asymbioticus)).